The chain runs to 314 residues: tRNA dimethylallyltransferase (314 aa).

Gly-12 to Thr-19 contacts ATP. Thr-14 to Thr-19 contacts substrate. 4 interaction with substrate tRNA regions span residues Asp-37–Leu-40, Gln-161–Arg-165, Arg-242–Arg-247, and Lys-275–Arg-282.

Belongs to the IPP transferase family. As to quaternary structure, monomer. It depends on Mg(2+) as a cofactor.

It carries out the reaction adenosine(37) in tRNA + dimethylallyl diphosphate = N(6)-dimethylallyladenosine(37) in tRNA + diphosphate. Its function is as follows. Catalyzes the transfer of a dimethylallyl group onto the adenine at position 37 in tRNAs that read codons beginning with uridine, leading to the formation of N6-(dimethylallyl)adenosine (i(6)A). In Mannheimia succiniciproducens (strain KCTC 0769BP / MBEL55E), this protein is tRNA dimethylallyltransferase.